The sequence spans 548 residues: Protein GPR108 (548 aa).

Positions Met-1–Gly-32 are cleaved as a signal peptide. Residues Asn-57, Asn-63, and Asn-109 are each glycosylated (N-linked (GlcNAc...) asparagine). Residues Asp-165–Val-190 form a disordered region. Asn-205 and Asn-209 each carry an N-linked (GlcNAc...) asparagine glycan. 7 helical membrane passes run Leu-268 to Cys-288, Ile-297 to Ile-317, Leu-341 to Val-361, Ile-372 to Ser-392, Ile-406 to Ile-426, Val-454 to Val-474, and Trp-478 to Gly-498. N-linked (GlcNAc...) asparagine glycosylation occurs at Asn-539.

This sequence belongs to the LU7TM family.

It localises to the golgi apparatus. The protein localises to the cis-Golgi network membrane. Its subcellular location is the trans-Golgi network membrane. The protein resides in the golgi apparatus membrane. Functionally, may play a role in intracellular immune modulation by activating NF-kappaB response and attenuating Toll-like-receptor response. This Bos taurus (Bovine) protein is Protein GPR108 (GPR108).